We begin with the raw amino-acid sequence, 224 residues long: Prolactin-2C3 (224 aa).

Residues 1–29 (MLPSSIQPCSWILLLLLVNSSLLWKNVAS) form the signal peptide. A glycan (N-linked (GlcNAc...) asparagine) is linked at Asn-19. The cysteines at positions 33 and 40 are disulfide-linked. N-linked (GlcNAc...) asparagine glycans are attached at residues Asn-57, Asn-75, and Asn-88. Disulfide bonds link Cys-87–Cys-199 and Cys-216–Cys-224.

Belongs to the somatotropin/prolactin family. In terms of processing, N-glycosylated and sialylated. As to expression, expressed in placenta and hair follicles, with highest expression levels detected in the outer root sheath and no expression detected in bulb. Expressed in placenta, skin wounds, keratinocytes and weakly in embryonic fibroblasts. Expressed in brain, cerebellum and in Neuro-2a cell line. Not detected in liver, kidney, ovary, pituitary gland and brain.

The protein resides in the secreted. It is found in the endoplasmic reticulum. Its function is as follows. May have a role in embryonic development. It is likely to provide a growth stimulus to target cells in maternal and fetal tissues during the development of the embryo at mid-gestation. May play a role during wound healing and in the hair follicle cycle as a growth factor and/or an angiogenesis factor. May play a role in microvilli formation and cell proliferation of neuroblastoma cells. The protein is Prolactin-2C3 (Prl2c3) of Mus musculus (Mouse).